Consider the following 349-residue polypeptide: tRNA pseudouridine synthase D (349 aa).

A substrate-binding site is contributed by Phe26. The active-site Nucleophile is the Asp79. Asn128 contacts substrate. The TRUD domain occupies 154 to 302 (GVPNYFGSQR…VEGSRRAVLL (149 aa)). Phe328 lines the substrate pocket.

This sequence belongs to the pseudouridine synthase TruD family.

The catalysed reaction is uridine(13) in tRNA = pseudouridine(13) in tRNA. Its function is as follows. Responsible for synthesis of pseudouridine from uracil-13 in transfer RNAs. The sequence is that of tRNA pseudouridine synthase D from Yersinia pseudotuberculosis serotype O:1b (strain IP 31758).